The chain runs to 134 residues: Small ribosomal subunit protein bS6 (134 aa).

Over residues 113-122 the composition is skewed to basic and acidic residues; the sequence is NRDIKEKEQP. The interval 113–134 is disordered; sequence NRDIKEKEQPSESNVDADLKVN.

The protein belongs to the bacterial ribosomal protein bS6 family.

Functionally, binds together with bS18 to 16S ribosomal RNA. This chain is Small ribosomal subunit protein bS6, found in Borrelia duttonii (strain Ly).